Reading from the N-terminus, the 571-residue chain is Glutamate--tRNA ligase (571 aa).

The 'HIGH' region motif lies at proline 110–serine 120.

It belongs to the class-I aminoacyl-tRNA synthetase family. Glutamate--tRNA ligase type 2 subfamily.

Its subcellular location is the cytoplasm. It catalyses the reaction tRNA(Glu) + L-glutamate + ATP = L-glutamyl-tRNA(Glu) + AMP + diphosphate. Functionally, catalyzes the attachment of glutamate to tRNA(Glu) in a two-step reaction: glutamate is first activated by ATP to form Glu-AMP and then transferred to the acceptor end of tRNA(Glu). This is Glutamate--tRNA ligase from Methanosarcina acetivorans (strain ATCC 35395 / DSM 2834 / JCM 12185 / C2A).